Consider the following 327-residue polypeptide: Complex I intermediate-associated protein 30, mitochondrial (327 aa).

The N-terminal 24 residues, 1 to 24 (MALVHKLLRGTYFLRKFSKPTSAL), are a transit peptide targeting the mitochondrion. Residues 42–63 (PVASPGKASSQRKTEGDLQGDH) form a disordered region. A compositionally biased stretch (basic and acidic residues) spans 53-63 (RKTEGDLQGDH). S318 carries the phosphoserine modification.

Belongs to the CIA30 family. Part of the mitochondrial complex I assembly/MCIA complex that comprises at least the core subunits TMEM126B, NDUFAF1, ECSIT and ACAD9 and complement subunits such as COA1 and TMEM186. Interacts with ECSIT. Interacts with ACAD9. At early stages of complex I assembly, it is found in intermediate subcomplexes that contain different subunits including NDUFB6, NDUFA6, NDUFA9, NDUFS3, NDUFS7, ND1, ND2 and ND3. Interacts with TMEM70 and TMEM242. Ubiquitous.

It is found in the mitochondrion. It localises to the mitochondrion matrix. In terms of biological role, as part of the MCIA complex, involved in the assembly of the mitochondrial complex I. The sequence is that of Complex I intermediate-associated protein 30, mitochondrial from Homo sapiens (Human).